An 826-amino-acid chain; its full sequence is Zinc phosphodiesterase ELAC protein 2 (826 aa).

The N-terminal 16 residues, 1–16 (MWALCSLLRSAAGRTM), are a transit peptide targeting the mitochondrion. 2 disordered regions span residues 16-51 (MSQG…PSGC) and 188-231 (EQRR…VSQR). The span at 27–38 (ARRERPRKDPLR) shows a compositional bias: basic and acidic residues. 6 positions are modified to phosphoserine: Ser199, Ser208, Ser212, Ser229, Ser618, and Ser736. A compositionally biased stretch (basic and acidic residues) spans 208-224 (SPERSSDSESNENEPHL). Residues 798-826 (ELAGGLEDGEPQQKRAHTEEPQAKKVRAQ) are disordered. Positions 808 to 820 (PQQKRAHTEEPQA) are enriched in basic and acidic residues.

This sequence belongs to the RNase Z family. As to quaternary structure, homodimer. Interacts with PTCD1. Zn(2+) is required as a cofactor.

The protein resides in the mitochondrion. Its subcellular location is the mitochondrion matrix. It is found in the mitochondrion nucleoid. It localises to the nucleus. It catalyses the reaction Endonucleolytic cleavage of RNA, removing extra 3' nucleotides from tRNA precursor, generating 3' termini of tRNAs. A 3'-hydroxy group is left at the tRNA terminus and a 5'-phosphoryl group is left at the trailer molecule.. Its function is as follows. Zinc phosphodiesterase, which displays mitochondrial tRNA 3'-processing endonuclease activity. Involved in tRNA maturation, by removing a 3'-trailer from precursor tRNA. Associates with mitochondrial DNA complexes at the nucleoids to initiate RNA processing and ribosome assembly. The polypeptide is Zinc phosphodiesterase ELAC protein 2 (ELAC2) (Pan troglodytes (Chimpanzee)).